The primary structure comprises 441 residues: G2/mitotic-specific cyclin-2 (441 aa).

The protein belongs to the cyclin family. Cyclin AB subfamily. Interacts with the CDC2 and CDK2 protein kinases to form a serine/threonine kinase holoenzyme complex. The cyclin subunit imparts substrate specificity to the complex.

Functionally, essential for the control of the cell cycle at the G2/M (mitosis) transition. G2/M cyclins accumulate steadily during G2 and are abruptly destroyed at mitosis. The chain is G2/mitotic-specific cyclin-2 from Antirrhinum majus (Garden snapdragon).